The sequence spans 614 residues: UvrABC system protein C (614 aa).

Residues 12–89 (DKPGVYLFRG…IKEHRPRYNV (78 aa)) enclose the GIY-YIG domain. In terms of domain architecture, UVR spans 198–233 (ADLVRGLARKMEAAAANLEFERAAELRDQLRAVEQV).

The protein belongs to the UvrC family. As to quaternary structure, interacts with UvrB in an incision complex.

The protein localises to the cytoplasm. Its function is as follows. The UvrABC repair system catalyzes the recognition and processing of DNA lesions. UvrC both incises the 5' and 3' sides of the lesion. The N-terminal half is responsible for the 3' incision and the C-terminal half is responsible for the 5' incision. This Desulforudis audaxviator (strain MP104C) protein is UvrABC system protein C.